A 347-amino-acid polypeptide reads, in one-letter code: S-adenosylmethionine:tRNA ribosyltransferase-isomerase (347 aa).

This sequence belongs to the QueA family. Monomer.

The protein resides in the cytoplasm. The enzyme catalyses 7-aminomethyl-7-carbaguanosine(34) in tRNA + S-adenosyl-L-methionine = epoxyqueuosine(34) in tRNA + adenine + L-methionine + 2 H(+). Its pathway is tRNA modification; tRNA-queuosine biosynthesis. In terms of biological role, transfers and isomerizes the ribose moiety from AdoMet to the 7-aminomethyl group of 7-deazaguanine (preQ1-tRNA) to give epoxyqueuosine (oQ-tRNA). This is S-adenosylmethionine:tRNA ribosyltransferase-isomerase from Xylella fastidiosa (strain M23).